The sequence spans 274 residues: Undecaprenyl-diphosphatase (274 aa).

8 helical membrane passes run 6 to 26, 45 to 65, 94 to 114, 117 to 137, 155 to 174, 191 to 211, 223 to 243, and 253 to 273; these read SLFIAFVLGVVEGLTEFLPVS, AKTFEVIIQLGSILAVVVMFW, GHILLAMIPAVVLGLLFHDVI, LFAPKNVMYALVVGGFLLLAA, YRQAFMIGCFQCLALWPGFS, YAAAEFSFILAVPMMIGASGL, GDLPMFAVGFATAFVVALIAI, and ISFVPFAIYRFIVAGVVYMVF.

The protein belongs to the UppP family.

The protein resides in the cell inner membrane. The catalysed reaction is di-trans,octa-cis-undecaprenyl diphosphate + H2O = di-trans,octa-cis-undecaprenyl phosphate + phosphate + H(+). Its function is as follows. Catalyzes the dephosphorylation of undecaprenyl diphosphate (UPP). Confers resistance to bacitracin. In Serratia proteamaculans (strain 568), this protein is Undecaprenyl-diphosphatase.